Reading from the N-terminus, the 577-residue chain is Probable L-gulonolactone oxidase 4 (577 aa).

The N-terminal stretch at M1–S17 is a signal peptide. The 183-residue stretch at S46–M228 folds into the FAD-binding PCMH-type domain.

This sequence belongs to the oxygen-dependent FAD-linked oxidoreductase family. It depends on FAD as a cofactor.

It carries out the reaction L-gulono-1,4-lactone + O2 = L-ascorbate + H2O2 + H(+). Its pathway is cofactor biosynthesis; L-ascorbate biosynthesis. In terms of biological role, may be involved in the biosynthesis of ascorbic acid. The sequence is that of Probable L-gulonolactone oxidase 4 from Arabidopsis thaliana (Mouse-ear cress).